The primary structure comprises 159 residues: Protransforming growth factor alpha (159 aa).

Positions 1 to 23 (MVPAAGQLALLALGILVAVCQAL) are cleaved as a signal peptide. Positions 24-38 (ENSTSPLSDSPVAAA) are cleaved as a propeptide — removed in mature form. Topologically, residues 24–97 (ENSTSPLSDS…AVVAASQKKQ (74 aa)) are extracellular. N-linked (GlcNAc...) asparagine glycosylation occurs at N25. In terms of domain architecture, EGF-like spans 42-82 (HFNKCPDSHTQYCFHGTCRFLVQEEKPACVCHSGYVGVRCE). Cystine bridges form between C46-C59, C54-C70, and C72-C81. A propeptide spans 89-159 (VVAASQKKQA…TACCHSETVV (71 aa)) (removed in mature form). A helical transmembrane segment spans residues 98-123 (AITALVVVSIVALAVLIITCVLIHCC). Over 124 to 159 (QVRKHCEWCRALVCRHEKPSALLKGRTACCHSETVV) the chain is Cytoplasmic. 2 S-palmitoyl cysteine lipidation sites follow: C152 and C153.

Interacts with the PDZ domains of MAGI3, SDCBP and SNTA1. The interaction with SDCBP, is required for the targeting to the cell surface. In the endoplasmic reticulum, in its immature form (i.e. with a prosegment and lacking full N-glycosylation), interacts with CNIH. In the Golgi apparatus, may form a complex with CNIH and GORASP2. Interacts (via cytoplasmic C-terminal domain) with NKD2.

It localises to the secreted. The protein resides in the extracellular space. The protein localises to the cell membrane. Its function is as follows. TGF alpha is a mitogenic polypeptide that is able to bind to the EGF receptor/EGFR and to act synergistically with TGF beta to promote anchorage-independent cell proliferation in soft agar. The protein is Protransforming growth factor alpha (Tgfa) of Rattus norvegicus (Rat).